A 354-amino-acid chain; its full sequence is Uroporphyrinogen decarboxylase (354 aa).

Substrate contacts are provided by residues 27–31 (RQAGR), Asp-77, Tyr-154, Thr-209, and His-327.

The protein belongs to the uroporphyrinogen decarboxylase family. Homodimer.

The protein localises to the cytoplasm. It catalyses the reaction uroporphyrinogen III + 4 H(+) = coproporphyrinogen III + 4 CO2. It functions in the pathway porphyrin-containing compound metabolism; protoporphyrin-IX biosynthesis; coproporphyrinogen-III from 5-aminolevulinate: step 4/4. In terms of biological role, catalyzes the decarboxylation of four acetate groups of uroporphyrinogen-III to yield coproporphyrinogen-III. The protein is Uroporphyrinogen decarboxylase of Escherichia coli O6:K15:H31 (strain 536 / UPEC).